The primary structure comprises 235 residues: Small ribosomal subunit protein uS2c (235 aa).

The protein belongs to the universal ribosomal protein uS2 family.

It is found in the plastid. The protein resides in the chloroplast. The sequence is that of Small ribosomal subunit protein uS2c (rps2) from Huperzia lucidula (Shining clubmoss).